The following is a 371-amino-acid chain: Cyanide hydratase (371 aa).

The CN hydrolase domain maps to 6–285 (YKAAAVTSEP…DGLLYVDIDL (280 aa)). The Proton acceptor role is filled by Glu46. Lys128 is an active-site residue. Cys163 (nucleophile) is an active-site residue. The span at 339-353 (GLNRPLDPPKDERHG) shows a compositional bias: basic and acidic residues. A disordered region spans residues 339 to 371 (GLNRPLDPPKDERHGIVGVAGQKSAEQRKAGDL).

It belongs to the carbon-nitrogen hydrolase superfamily. Nitrilase family. As to quaternary structure, oligomer of dimers, forming left-handed helical fibers.

The enzyme catalyses formamide = hydrogen cyanide + H2O. Its function is as follows. Catalyzes the hydration of cyanide to formamide. Degradation of cyanide may be important for plant pathogenic fungi in infection of cyanogenic plants. Also acts on 2-cyanopyridine, fumaronitrile and benzonitrile, albeit at a lower rate. This chain is Cyanide hydratase (nit), found in Stereum hirsutum (strain FP-91666) (White-rot fungus).